A 255-amino-acid polypeptide reads, in one-letter code: Epoxyqueuosine reductase QueH (255 aa).

[4Fe-4S] cluster contacts are provided by cysteine 44, cysteine 45, cysteine 128, and cysteine 131. Cysteine 210 and cysteine 212 are oxidised to a cystine.

This sequence belongs to the QueH family.

It carries out the reaction epoxyqueuosine(34) in tRNA + AH2 = queuosine(34) in tRNA + A + H2O. The protein operates within tRNA modification; tRNA-queuosine biosynthesis. Functionally, catalyzes the conversion of epoxyqueuosine (oQ) to queuosine (Q), which is a hypermodified base found in the wobble positions of tRNA(Asp), tRNA(Asn), tRNA(His) and tRNA(Tyr). In Streptococcus pyogenes serotype M1, this protein is Epoxyqueuosine reductase QueH.